Reading from the N-terminus, the 283-residue chain is Light-independent protochlorophyllide reductase iron-sulfur ATP-binding protein (283 aa).

Residues 15–20 and lysine 44 contribute to the ATP site; that span reads GIGKST. Residue serine 19 participates in Mg(2+) binding. The [4Fe-4S] cluster site is built by cysteine 100 and cysteine 134. 185–186 serves as a coordination point for ATP; that stretch reads NR.

Belongs to the NifH/BchL/ChlL family. As to quaternary structure, homodimer. Protochlorophyllide reductase is composed of three subunits; ChlL, ChlN and ChlB. Requires [4Fe-4S] cluster as cofactor.

The enzyme catalyses chlorophyllide a + oxidized 2[4Fe-4S]-[ferredoxin] + 2 ADP + 2 phosphate = protochlorophyllide a + reduced 2[4Fe-4S]-[ferredoxin] + 2 ATP + 2 H2O. It functions in the pathway porphyrin-containing compound metabolism; chlorophyll biosynthesis (light-independent). Functionally, component of the dark-operative protochlorophyllide reductase (DPOR) that uses Mg-ATP and reduced ferredoxin to reduce ring D of protochlorophyllide (Pchlide) to form chlorophyllide a (Chlide). This reaction is light-independent. The L component serves as a unique electron donor to the NB-component of the complex, and binds Mg-ATP. The protein is Light-independent protochlorophyllide reductase iron-sulfur ATP-binding protein of Synechococcus sp. (strain JA-3-3Ab) (Cyanobacteria bacterium Yellowstone A-Prime).